A 1045-amino-acid polypeptide reads, in one-letter code: MANSRIYPQFFHTLVPSFHTHLMIPEDFFSEYIEGRSVAELKLDFSDKSWEVKLSDRRITDGWEEFVVANDFRIGDVVAFRYVGNLVFHVSNLGPNYYEIEHNDGESLLRKRLHQVDFSSNNGDVCDSEELPKEKKAKTNSEEADAVSSSSSADKSCFMAIITALDLTTDTLYLPLHFTSANGLTRKNREIILTDGGERSRVLDLRFDESSGTFYISRGWRNFCDENGQKAGGFFLFKLVGKGETLVLSFCPTESINGEENITREDSKDECSSLDSLMNIVEKKKYIPKPRGSPYSSYSPSHKQFVTFTLPPDYARIGKLSLSAPFVRENGINKPGEICLLDKHGRKWLTSLLLDSKGTMSLGKGWKEFVKANSLETGFTLKLIWEETTPVLSLCSPESNSDREQEEISKAIEKHSLFIDPSNRDKISNNDKEENMSWERKKDHLKSRDSTLSSQKQFVTITITPSSDRLVSLSNDSCLVVVSLLYFDMRLPKVFTRENGINKPGRITLLGKDGIKQQTNLLFDKANGAMSLGHGWKDFVKDNGLKTGDSFTLKLIWEDQTPVLSLCPADCSIDREAGGGRSETNQKKSLPIEPSTCKKIRKDVNIKDDNSKEKNDKEESKSVDGERKYLRGTYLTPSSQKHFVTLTITPSSIKKDRLILSPQFARKNNIDKPGMIYLLDTDGTKWLISLQRDKKGTMSLGKGWKEFAEANDFKLGESFTMELVWEDTTPMLSLLRTEFRSSKANEKESISSEHKTRESSPTIKNRIVTPALTPEDVKACKLILPSQFMKKIRTVDKERNHLKGRDLNPSCQKQFVTFTITPTCVGKNRLILSAQFARENNINQPGTIYLLDTDGRKWLTTVKRDKKGTMSLGKGWKEFADTKDLKSGDSFTMELIWEDTNPVLSLLRTKFSSSKSNKEESIFLEPKSRDSSSPTIVNRFVTLALTPEDVTACKLILPSQFMKANGINNKLGKITLLGENGVEWPGYMLSLDGTLALGNGWEGFCEANGVKLGQTFTLEFVNEQDTTTTPVLKFSSVETIYKNVN.

The TF-B3 1 DNA-binding region spans 7–96; that stretch reads YPQFFHTLVP…VFHVSNLGPN (90 aa). Residues 121-147 are disordered; the sequence is NNGDVCDSEELPKEKKAKTNSEEADAV. Residues 130 to 141 are compositionally biased toward basic and acidic residues; sequence ELPKEKKAKTNS. 2 consecutive DNA-binding regions (TF-B3) follow at residues 157 to 253 and 305 to 398; these read CFMA…FCPT and FVTF…CSPE. The segment at 423 to 449 is disordered; sequence NRDKISNNDKEENMSWERKKDHLKSRD. Residues 474–570 constitute a DNA-binding region (TF-B3 4); that stretch reads SNDSCLVVVS…TPVLSLCPAD (97 aa). The disordered stretch occupies residues 606–625; sequence IKDDNSKEKNDKEESKSVDG. DNA-binding regions (TF-B3) lie at residues 643 to 738, 815 to 910, and 940 to 1035; these read FVTL…LRTE, FVTF…LRTK, and FVTL…LKFS.

The protein localises to the nucleus. The polypeptide is B3 domain-containing protein REM13 (REM13) (Arabidopsis thaliana (Mouse-ear cress)).